Reading from the N-terminus, the 171-residue chain is Inosine/xanthosine triphosphatase (171 aa).

Position 8 to 13 (threonine 8 to lysine 13) interacts with substrate. Residues aspartate 38 and glutamine 68 each coordinate Mg(2+).

The protein belongs to the YjjX NTPase family. In terms of assembly, homodimer. It depends on Mg(2+) as a cofactor. The cofactor is Mn(2+).

The catalysed reaction is XTP + H2O = XDP + phosphate + H(+). The enzyme catalyses ITP + H2O = IDP + phosphate + H(+). Functionally, phosphatase that hydrolyzes non-canonical purine nucleotides such as XTP and ITP to their respective diphosphate derivatives. Probably excludes non-canonical purines from DNA/RNA precursor pool, thus preventing their incorporation into DNA/RNA and avoiding chromosomal lesions. This is Inosine/xanthosine triphosphatase from Cronobacter sakazakii (strain ATCC BAA-894) (Enterobacter sakazakii).